The primary structure comprises 118 residues: Large ribosomal subunit protein bL20 (118 aa).

The protein belongs to the bacterial ribosomal protein bL20 family.

Binds directly to 23S ribosomal RNA and is necessary for the in vitro assembly process of the 50S ribosomal subunit. It is not involved in the protein synthesizing functions of that subunit. The chain is Large ribosomal subunit protein bL20 from Syntrophotalea carbinolica (strain DSM 2380 / NBRC 103641 / GraBd1) (Pelobacter carbinolicus).